The sequence spans 227 residues: Cytochrome c oxidase subunit 2 (227 aa).

Residues 1–14 (MAYPFQLGLQDATS) lie on the Mitochondrial intermembrane side of the membrane. Residues 15–45 (PIMEELLHFHDHTLMIVFLISSLVLYIISLM) traverse the membrane as a helical segment. Residues 46–59 (LTTKLTHTSTMDAQ) lie on the Mitochondrial matrix side of the membrane. A helical transmembrane segment spans residues 60–87 (EVETVWTILPAIILILIALPSLRILYMM). The Mitochondrial intermembrane segment spans residues 88–227 (DEINNPSLTV…YFETWSALMV (140 aa)). Positions 161, 196, 198, 200, 204, and 207 each coordinate Cu cation. Residue Glu-198 participates in Mg(2+) binding. Tyr-218 is modified (phosphotyrosine).

It belongs to the cytochrome c oxidase subunit 2 family. As to quaternary structure, component of the cytochrome c oxidase (complex IV, CIV), a multisubunit enzyme composed of 14 subunits. The complex is composed of a catalytic core of 3 subunits MT-CO1, MT-CO2 and MT-CO3, encoded in the mitochondrial DNA, and 11 supernumerary subunits COX4I, COX5A, COX5B, COX6A, COX6B, COX6C, COX7A, COX7B, COX7C, COX8 and NDUFA4, which are encoded in the nuclear genome. The complex exists as a monomer or a dimer and forms supercomplexes (SCs) in the inner mitochondrial membrane with NADH-ubiquinone oxidoreductase (complex I, CI) and ubiquinol-cytochrome c oxidoreductase (cytochrome b-c1 complex, complex III, CIII), resulting in different assemblies (supercomplex SCI(1)III(2)IV(1) and megacomplex MCI(2)III(2)IV(2)). Found in a complex with TMEM177, COA6, COX18, COX20, SCO1 and SCO2. Interacts with TMEM177 in a COX20-dependent manner. Interacts with COX20. Interacts with COX16. Cu cation serves as cofactor.

The protein localises to the mitochondrion inner membrane. It carries out the reaction 4 Fe(II)-[cytochrome c] + O2 + 8 H(+)(in) = 4 Fe(III)-[cytochrome c] + 2 H2O + 4 H(+)(out). In terms of biological role, component of the cytochrome c oxidase, the last enzyme in the mitochondrial electron transport chain which drives oxidative phosphorylation. The respiratory chain contains 3 multisubunit complexes succinate dehydrogenase (complex II, CII), ubiquinol-cytochrome c oxidoreductase (cytochrome b-c1 complex, complex III, CIII) and cytochrome c oxidase (complex IV, CIV), that cooperate to transfer electrons derived from NADH and succinate to molecular oxygen, creating an electrochemical gradient over the inner membrane that drives transmembrane transport and the ATP synthase. Cytochrome c oxidase is the component of the respiratory chain that catalyzes the reduction of oxygen to water. Electrons originating from reduced cytochrome c in the intermembrane space (IMS) are transferred via the dinuclear copper A center (CU(A)) of subunit 2 and heme A of subunit 1 to the active site in subunit 1, a binuclear center (BNC) formed by heme A3 and copper B (CU(B)). The BNC reduces molecular oxygen to 2 water molecules using 4 electrons from cytochrome c in the IMS and 4 protons from the mitochondrial matrix. The chain is Cytochrome c oxidase subunit 2 (MT-CO2) from Urocyon cinereoargenteus (Gray fox).